A 388-amino-acid chain; its full sequence is Acyl-CoA dehydrogenase fadE12 (388 aa).

The protein belongs to the acyl-CoA dehydrogenase family. FAD serves as cofactor.

It carries out the reaction a 2,3-saturated acyl-CoA + A = a 2,3-dehydroacyl-CoA + AH2. The sequence is that of Acyl-CoA dehydrogenase fadE12 (fadE12) from Mycobacterium tuberculosis (strain CDC 1551 / Oshkosh).